We begin with the raw amino-acid sequence, 74 residues long: Cytochrome c oxidase assembly factor 5 (74 aa).

Residues 27-65 (ESDCVVQEGKSPRQCLKEGYCNSLKYAFFECKRSVLDNR) enclose the CHCH domain. A Cx10C motif motif is present at residues 30-41 (CVVQEGKSPRQC). Disulfide bonds link C30–C57 and C41–C47. Residue S37 is modified to Phosphoserine. Residues 47–57 (CNSLKYAFFEC) carry the Cx9C motif motif.

It belongs to the PET191 family.

Functionally, involved in an early step of the mitochondrial complex IV assembly process. This chain is Cytochrome c oxidase assembly factor 5 (Coa5), found in Pongo abelii (Sumatran orangutan).